The chain runs to 300 residues: uncharacterized protein (300 aa).

3 residues coordinate a divalent metal cation: glutamate 146, glutamate 148, and aspartate 177.

The protein belongs to the FAH family.

This is an uncharacterized protein from Staphylococcus aureus (strain MW2).